The primary structure comprises 184 residues: MYQLEKIWVLLCLALVGVLGFGQFHMKHYQLQRNYNTQEDSGENDNSVLRTFRRCMWEQSKFLPRRLVLLSLCSNLFCENNHIMPRSRSIFVVEKMSRPNDCLDILPEQCEQGDEEELMYKPFPDCCPVYCNLKRRMQRLRTMHFRHRLLRNKQDGSAGSAGGGSAGGDGPNNSLLSEFVYNNY.

A signal peptide spans 1 to 20; sequence MYQLEKIWVLLCLALVGVLG.

This is an uncharacterized protein from Drosophila melanogaster (Fruit fly).